The chain runs to 1240 residues: MESEFSQSLTPPVSPSALNHYGESAPSRPPCFTCAYEAGREDTGRLSSNGYISRGALKRLLLKLDPAPADFGGDTVDIFDFPWVTETALVESTKLLFGLFRQKVLKLETLVQSSSHDFGQASSLHYEAEELRQQCVLFLSYIKVFIYRFLEPSQSLDEGPVHPFKDAEAQLPSVLVEELFSITLLIGRIGNLPANVQSAFTIQHQGKLFPPSWQLLHLHLDIHWSVLEILHLLEQRMMGQVVYAHQFVNLTGETLTNISLFEDQVNNLFCDLIGLAMNKYNKVRPTETLNTHHYHCLCTKELWILLIHLLEHRSKSIHTQSFWSYINALLQTVLKGTTSGDRDPGFPVHCKDPEGFTWWLLTHLAQIGMHNRNGTAQQEKQLEDNWSFVIGLLKSICDPKKAAQEEQIRVVVHCCLSLSLMWGPNVSAVTTFWEYYSKNLNSSFTVPWLGVSGLGSICRTPLCLLQQAKSCCSPAPVGSSSHTQLYRTANSFHIFLRILALHLSQEHAGGAPWRQIKGRLYSKFHQRRMMELSDMGLLHFLLLFLVLAQCAELEDVASRACDLLAMLPTNSTPLALRALQWRGQLALVLLYLEKGLDVGALAEQLAVYFSQAAREFYLKTTEPSRKLALWAPLSSYLEGVSEVFETSPNLTLSEERLLNEGFGLLLPACRQSELSSALGFLQTVLAQLRRVHQRCGQPSHSVDSPSWAPLPSVAKERHQAVAAALWSHFFPFLCSMRLSQTPPPQLADAAAGFTLLALDMPGSAPQNLQPHPIQSIMQSFGWDEMLHPLLVTHYLNHLLQNGELVSWVSSGQGSGSAQALCVRAWIRCVLQQYLHKSPDAPDARAGRNLDEQLAELTRQVFRLPEVEFVLQRAGLQSAAVKDPKAAMAVFLKAVGRSYCELQLLSERSSAVSRALEYVGDILKYIKPYLQNKSREGLQLAYWTIGCLVKHWSHLLATSKAQQLLFRIVDVLLLPHALLQQDTAAHTQMLSALKDSLPMFLQGLSVAVSVSHSQGAYLKQQQHSVISQYLSRFLPATPSTGAVVNHPVLLAACESTPSPQGERLRKSILHVLRENFLQFKGLAPPPRLAAVLCFLLELLKRNSDRDPALLTIPLPSVLRCLMLVNEPQVKRLSSEVTQLIVERCTAAVGEQPCEHTTAILRAFVDENEGVYDQQVYNVLEVVAVLHPFTVAALIPFLTLSLRKTECKRGLGKNTSLRNGYRRLLALLGDSGQAEMISLEED.

Over residues 1–11 the composition is skewed to polar residues; sequence MESEFSQSLTP. A disordered region spans residues 1 to 26; that stretch reads MESEFSQSLTPPVSPSALNHYGESAP.

Belongs to the MMS22 family. MMS22L subfamily. As to quaternary structure, component of the MMS22L-TONSL complex.

The protein localises to the nucleus. It is found in the chromosome. Its function is as follows. Component of the MMS22L-TONSL complex, a complex that promotes homologous recombination-mediated repair of double-strand breaks (DSBs) at stalled or collapsed replication forks. The MMS22L-TONSL complex is required to maintain genome integrity during DNA replication. It mediates the assembly of RAD51 filaments on single-stranded DNA (ssDNA): the MMS22L-TONSL complex is recruited to DSBs following histone replacement by histone chaperones and eviction of the replication protein A complex (RPA/RP-A) from DSBs. Following recruitment to DSBs, the TONSL-MMS22L complex promotes recruitment of RAD51 filaments and subsequent homologous recombination. Within the complex, MMS22L acts by binding ssDNA. In Danio rerio (Zebrafish), this protein is Protein MMS22-like (mms22l).